A 324-amino-acid chain; its full sequence is Fructose-1,6-bisphosphatase class 1 (324 aa).

Glu-88, Asp-107, Leu-109, and Asp-110 together coordinate Mg(2+). Substrate-binding positions include 110–113 (DGSS), Asn-199, and Lys-265. Glu-271 is a binding site for Mg(2+).

The protein belongs to the FBPase class 1 family. In terms of assembly, homotetramer. Mg(2+) serves as cofactor.

The protein localises to the cytoplasm. The catalysed reaction is beta-D-fructose 1,6-bisphosphate + H2O = beta-D-fructose 6-phosphate + phosphate. Its pathway is carbohydrate biosynthesis; gluconeogenesis. This chain is Fructose-1,6-bisphosphatase class 1, found in Neisseria meningitidis serogroup A / serotype 4A (strain DSM 15465 / Z2491).